The sequence spans 189 residues: Elongation factor P (189 aa).

Belongs to the elongation factor P family.

It localises to the cytoplasm. The protein operates within protein biosynthesis; polypeptide chain elongation. In terms of biological role, involved in peptide bond synthesis. Stimulates efficient translation and peptide-bond synthesis on native or reconstituted 70S ribosomes in vitro. Probably functions indirectly by altering the affinity of the ribosome for aminoacyl-tRNA, thus increasing their reactivity as acceptors for peptidyl transferase. The sequence is that of Elongation factor P from Pseudomonas syringae pv. tomato (strain ATCC BAA-871 / DC3000).